A 302-amino-acid polypeptide reads, in one-letter code: UDP-N-acetylenolpyruvoylglucosamine reductase (302 aa).

The 180-residue stretch at 31–210 (IGGQTKVYFR…ENEVLELKKK (180 aa)) folds into the FAD-binding PCMH-type domain. Residue R175 is part of the active site. The Proton donor role is filled by S224. The active site involves E297.

It belongs to the MurB family. The cofactor is FAD.

Its subcellular location is the cytoplasm. It carries out the reaction UDP-N-acetyl-alpha-D-muramate + NADP(+) = UDP-N-acetyl-3-O-(1-carboxyvinyl)-alpha-D-glucosamine + NADPH + H(+). Its pathway is cell wall biogenesis; peptidoglycan biosynthesis. Its function is as follows. Cell wall formation. This Pelagibacter ubique (strain HTCC1062) protein is UDP-N-acetylenolpyruvoylglucosamine reductase.